Consider the following 2153-residue polypeptide: RNA-directed RNA polymerase L (2153 aa).

Residues histidine 36, glutamate 54, aspartate 97, glutamate 110, and valine 111 each contribute to the Mn(2+) site. Catalysis depends on lysine 124, which acts as the For endonuclease activity. The RdRp catalytic domain occupies 957-1143 (TGKSIKFKRK…AINQEMWKSM (187 aa)). Aspartate 1100 contributes to the Mg(2+) binding site.

It belongs to the Bunyavirales RNA polymerase family. As to quaternary structure, interacts with the viral nucleoprotein. The cofactor is Mn(2+). Mg(2+) is required as a cofactor.

The protein localises to the host cytoplasm. It is found in the host perinuclear region. The enzyme catalyses RNA(n) + a ribonucleoside 5'-triphosphate = RNA(n+1) + diphosphate. In terms of biological role, RNA-dependent RNA polymerase, which is responsible for the replication and transcription of the viral RNA genome using antigenomic RNA as an intermediate. During transcription, synthesizes subgenomic RNAs and assures their capping by a cap-snatching mechanism, which involves the endonuclease activity cleaving the host capped pre-mRNAs. These short capped RNAs are then used as primers for viral transcription. Cleaves ssRNA substrates but not DNA. Seems to downregulate the expression of its own and heterologous mRNAs through its endonuclease activity. This Abrothrix longipilis (Long-haired grass mouse) protein is RNA-directed RNA polymerase L.